The following is a 522-amino-acid chain: Peptide methionine sulfoxide reductase MsrA/MsrB (522 aa).

Residues 17–174 form the Thioredoxin domain; it reads LALGACSPKI…ALALIRDPNA (158 aa). A disulfide bond links cysteine 68 and cysteine 71. The segment at 199 to 354 is peptide methionine sulfoxide reductase A; the sequence is RTIYLAGGCF…PNGYCHIDIR (156 aa). Residue cysteine 207 is part of the active site. One can recognise a MsrB domain in the interval 383–506; the sequence is DAELKRTLTE…NGASLKFIPL (124 aa). A disulfide bridge connects residues cysteine 440 and cysteine 495. Cysteine 495 serves as the catalytic Nucleophile.

It in the N-terminal section; belongs to the thioredoxin family. In the central section; belongs to the MsrA Met sulfoxide reductase family. This sequence in the C-terminal section; belongs to the MsrB Met sulfoxide reductase family.

The catalysed reaction is L-methionyl-[protein] + [thioredoxin]-disulfide + H2O = L-methionyl-(S)-S-oxide-[protein] + [thioredoxin]-dithiol. It carries out the reaction [thioredoxin]-disulfide + L-methionine + H2O = L-methionine (S)-S-oxide + [thioredoxin]-dithiol. The enzyme catalyses L-methionyl-[protein] + [thioredoxin]-disulfide + H2O = L-methionyl-(R)-S-oxide-[protein] + [thioredoxin]-dithiol. In terms of biological role, has an important function as a repair enzyme for proteins that have been inactivated by oxidation. Catalyzes the reversible oxidation-reduction of methionine sulfoxide in proteins to methionine. The sequence is that of Peptide methionine sulfoxide reductase MsrA/MsrB (msrAB) from Neisseria meningitidis serogroup A / serotype 4A (strain DSM 15465 / Z2491).